Consider the following 161-residue polypeptide: Anaerobic nitrite reductase HB2 (161 aa).

A Globin domain is found at 5–154 (VFTEKQEALV…LALAIKAEMK (150 aa)). The Homodimerization signature appears at 38-42 (EIAPA). The heme b site is built by Ser48, Lys62, His66, and His101. Positions 108–120 (DPHFEVVKEALVR) match the Homodimerization motif.

Belongs to the plant globin family. In terms of assembly, homodimer. Heme b serves as cofactor.

It localises to the cytoplasm. The protein localises to the nucleus. It carries out the reaction Fe(III)-heme b-[protein] + nitric oxide + H2O = Fe(II)-heme b-[protein] + nitrite + 2 H(+). In terms of biological role, phytoglobin that reduces nitrite to nitric oxide (NO) under anoxic conditions (e.g. during flooding or in waterlogged soil). May not function as an oxygen storage or transport protein. Has an unusually high affinity for O(2) through an hexacoordinate heme iron because of a very low dissociation constant. This Brassica napus (Rape) protein is Anaerobic nitrite reductase HB2.